The following is a 111-amino-acid chain: Cell division protein FtsB (111 aa).

Residues 1-3 (MRL) lie on the Cytoplasmic side of the membrane. A helical transmembrane segment spans residues 4–21 (ITLFLLLLLLAIQYPLWL). The Periplasmic portion of the chain corresponds to 22 to 111 (GKGGWLRVWD…PAALQPNHRH (90 aa)). A coiled-coil region spans residues 28 to 64 (RVWDMQKQVASQNQRNAELKQRNLKLEGEVKDLKEGT). A disordered region spans residues 90 to 111 (PAPKTSETPLPPPAALQPNHRH).

It belongs to the FtsB family. In terms of assembly, part of a complex composed of FtsB, FtsL and FtsQ.

Its subcellular location is the cell inner membrane. In terms of biological role, essential cell division protein. May link together the upstream cell division proteins, which are predominantly cytoplasmic, with the downstream cell division proteins, which are predominantly periplasmic. This chain is Cell division protein FtsB, found in Ralstonia nicotianae (strain ATCC BAA-1114 / GMI1000) (Ralstonia solanacearum).